A 478-amino-acid polypeptide reads, in one-letter code: Ribosomal RNA small subunit methyltransferase F (478 aa).

Residues 123-129, E147, D174, and D192 each bind S-adenosyl-L-methionine; that span reads AAAPGSK. The active-site Nucleophile is the C245.

The protein belongs to the class I-like SAM-binding methyltransferase superfamily. RsmB/NOP family.

Its subcellular location is the cytoplasm. It carries out the reaction cytidine(1407) in 16S rRNA + S-adenosyl-L-methionine = 5-methylcytidine(1407) in 16S rRNA + S-adenosyl-L-homocysteine + H(+). In terms of biological role, specifically methylates the cytosine at position 1407 (m5C1407) of 16S rRNA. In Vibrio campbellii (strain ATCC BAA-1116), this protein is Ribosomal RNA small subunit methyltransferase F.